The sequence spans 527 residues: ATP synthase subunit alpha (527 aa).

Residue 172 to 179 participates in ATP binding; sequence GDRQTGKT.

It belongs to the ATPase alpha/beta chains family. F-type ATPases have 2 components, CF(1) - the catalytic core - and CF(0) - the membrane proton channel. CF(1) has five subunits: alpha(3), beta(3), gamma(1), delta(1), epsilon(1). CF(0) has three main subunits: a(1), b(2) and c(9-12). The alpha and beta chains form an alternating ring which encloses part of the gamma chain. CF(1) is attached to CF(0) by a central stalk formed by the gamma and epsilon chains, while a peripheral stalk is formed by the delta and b chains.

The protein resides in the cell inner membrane. The enzyme catalyses ATP + H2O + 4 H(+)(in) = ADP + phosphate + 5 H(+)(out). Functionally, produces ATP from ADP in the presence of a proton gradient across the membrane. The alpha chain is a regulatory subunit. The polypeptide is ATP synthase subunit alpha (Bacteroides fragilis (strain ATCC 25285 / DSM 2151 / CCUG 4856 / JCM 11019 / LMG 10263 / NCTC 9343 / Onslow / VPI 2553 / EN-2)).